The primary structure comprises 548 residues: ComP-specific O-oligosaccharyltransferase (548 aa).

12 helical membrane-spanning segments follow: residues 8–28, 32–52, 68–88, 91–111, 119–139, 164–184, 189–209, 213–233, 239–259, 331–351, 363–383, and 418–438; these read IKNY…IIPN, LSST…LLTV, WFLF…IYFF, FFFS…GFNE, IVKK…LIAI, LGQP…LCYL, SLNN…NVMT, SAWI…QKKI, IFFN…FNLI, MLWN…CFLI, LFLF…YPFA, and TLFL…VLDI.

It belongs to the PglL O-oligosaccharyltransferase family.

It is found in the cell membrane. Functionally, specifically catalyzes the glycosylation of the pilin-like competence factor ComP. The chain is ComP-specific O-oligosaccharyltransferase from Acinetobacter baylyi (strain ATCC 33305 / BD413 / ADP1).